The primary structure comprises 29 residues: Trypsin inhibitor 1 (29 aa).

3 disulfides stabilise this stretch: C3–C20, C10–C22, and C16–C28.

It belongs to the protease inhibitor I7 (squash-type serine protease inhibitor) family.

The protein localises to the secreted. Functionally, inhibits trypsin. This chain is Trypsin inhibitor 1, found in Cucurbita maxima (Pumpkin).